We begin with the raw amino-acid sequence, 195 residues long: Ras-related protein Rab-31 (195 aa).

GTP-binding residues include glycine 16, glycine 18, lysine 19, serine 20, serine 21, aspartate 32, and histidine 33. Serine 20 is a binding site for Mg(2+). 2 consecutive short sequence motifs (switch) follow at residues 30–42 and 63–79; these read HFDHNISPTIGAS and AGQERFHSLAPMYYRGS. Position 36 is a phosphoserine (serine 36). Threonine 38, glycine 64, asparagine 119, aspartate 122, alanine 150, and lysine 151 together coordinate GTP. Threonine 38 contacts Mg(2+). Positions 168 to 195 are disordered; that stretch reads PPLGPQENGNSGGIKLGNQSLQASRRCC. The segment covering 184–195 has biased composition (polar residues); the sequence is GNQSLQASRRCC. S-geranylgeranyl cysteine attachment occurs at residues cysteine 194 and cysteine 195.

Belongs to the small GTPase superfamily. Rab family. Interacts with OCRL. Interacts (in GDP-bound form) with RIN3 and GAPVD1, which function as guanine exchange factors (GEF). Interacts with EGFR. Interacts with NGFR. Interacts (in GTP-bound form) with EEA1. Interacts (in GTP-bound form) with APPL2; interaction contributes to or enhances recruitment of APPL2 to the phagosomes; interaction enhances Fc-gamma receptor-mediated phagocytosis through PI3K/Akt signaling in macrophages. The cofactor is Mg(2+). Detected in brain astrocytes (at protein level).

The protein resides in the early endosome. Its subcellular location is the golgi apparatus. The protein localises to the trans-Golgi network. It is found in the trans-Golgi network membrane. It localises to the cytoplasmic vesicle. The protein resides in the phagosome. Its subcellular location is the phagosome membrane. The catalysed reaction is GTP + H2O = GDP + phosphate + H(+). Its activity is regulated as follows. Regulated by guanine nucleotide exchange factors (GEFs) including RIN3 and GAPVD1 which promote the exchange of bound GDP for free GTP. Regulated by GTPase activating proteins (GAPs) which increase the GTP hydrolysis activity. Inhibited by GDP dissociation inhibitors (GDIs) which prevent Rab-GDP dissociation. The small GTPases Rab are key regulators of intracellular membrane trafficking, from the formation of transport vesicles to their fusion with membranes. Rabs cycle between an inactive GDP-bound form and an active GTP-bound form that is able to recruit to membranes different set of downstream effectors directly responsible for vesicle formation, movement, tethering and fusion. Required for the integrity and for normal function of the Golgi apparatus and the trans-Golgi network. Plays a role in insulin-stimulated translocation of GLUT4 to the cell membrane. Plays a role in the maturation of phagosomes that engulf pathogens, such as S.aureus and Mycobacterium. Plays a role in M6PR transport from the trans-Golgi network to endosomes. Plays a role in the internalization of EGFR from the cell membrane into endosomes. In Mus musculus (Mouse), this protein is Ras-related protein Rab-31.